A 307-amino-acid polypeptide reads, in one-letter code: GTPase Era (307 aa).

Residues 7 to 181 enclose the Era-type G domain; that stretch reads RCGWVALMGP…VELIRKKLPK (175 aa). The G1 stretch occupies residues 15-22; it reads GPPNAGKS. 15-22 serves as a coordination point for GTP; it reads GPPNAGKS. Residues 41-45 are G2; it reads QTTRN. The interval 62–65 is G3; that stretch reads DTPG. Residues 62–66 and 130–133 each bind GTP; these read DTPGL and NKVD. Residues 130–133 are G4; it reads NKVD. Positions 160–162 are G5; it reads ISA. The 79-residue stretch at 212–290 folds into the KH type-2 domain; it reads LRQEVPYSVA…HLELWVKVRE (79 aa).

Belongs to the TRAFAC class TrmE-Era-EngA-EngB-Septin-like GTPase superfamily. Era GTPase family. In terms of assembly, monomer.

It localises to the cytoplasm. It is found in the cell inner membrane. An essential GTPase that binds both GDP and GTP, with rapid nucleotide exchange. Plays a role in 16S rRNA processing and 30S ribosomal subunit biogenesis and possibly also in cell cycle regulation and energy metabolism. This is GTPase Era from Desulfovibrio desulfuricans (strain ATCC 27774 / DSM 6949 / MB).